The chain runs to 1335 residues: Aldehyde oxidase 3 (1335 aa).

Residues 8 to 95 (DELIFFVNGK…GAAVTTVEGI (88 aa)) form the 2Fe-2S ferredoxin-type domain. The [2Fe-2S] cluster site is built by Cys47, Cys52, Cys55, and Cys77. Gln116 contacts Mo-molybdopterin. Residues Cys117, Cys120, Cys152, and Cys154 each coordinate [2Fe-2S] cluster. Residues 236-421 (FRGERTTWIA…ISVFVPRSSK (186 aa)) enclose the FAD-binding PCMH-type domain. Position 264–271 (264–271 (LVIGNTYL)) interacts with FAD. Position 320 is a phosphoserine (Ser320). FAD is bound by residues Ser354, His358, Asp367, and Leu411. Residues Ala802, Leu1043, and Gln1199 each coordinate Mo-molybdopterin. Glu1266 (proton acceptor; for azaheterocycle hydroxylase activity) is an active-site residue.

This sequence belongs to the xanthine dehydrogenase family. As to quaternary structure, homodimer. Requires [2Fe-2S] cluster as cofactor. FAD serves as cofactor. Mo-molybdopterin is required as a cofactor. As to expression, highly expressed in liver (at protein level). In liver, the expression is greater in males than females.

It localises to the cytoplasm. The enzyme catalyses an aldehyde + O2 + H2O = a carboxylate + H2O2 + H(+). Its activity is regulated as follows. Inhibited by potassium cyanide, menadione, benzamidine, raloxifene and norharmane. Its function is as follows. Oxidase with broad substrate specificity, oxidizing aromatic azaheterocycles, such as N1-methylnicotinamide and phthalazine, as well as aldehydes, such as benzaldehyde, retinal and pyridoxal. Plays a key role in the metabolism of xenobiotics and drugs containing aromatic azaheterocyclic substituents. Is probably involved in the regulation of reactive oxygen species homeostasis. May be a prominent source of superoxide generation via the one-electron reduction of molecular oxygen. May also catalyze nitric oxide (NO) production via the reduction of nitrite to NO with NADH or aldehyde as electron donor. The protein is Aldehyde oxidase 3 (Aox3) of Mus musculus (Mouse).